A 260-amino-acid polypeptide reads, in one-letter code: Snake venom serine protease KN14 (260 aa).

Positions 1 to 18 (MVLIRVLANLLILQLSYA) are cleaved as a signal peptide. Positions 19-24 (QKSSEL) are excised as a propeptide. A Peptidase S1 domain is found at 25-251 (VIGGDECNIN…HLDWIQSIIA (227 aa)). 5 cysteine pairs are disulfide-bonded: Cys31–Cys165, Cys100–Cys258, Cys144–Cys212, Cys176–Cys191, and Cys202–Cys227. His67 acts as the Charge relay system in catalysis. Asn105 carries N-linked (GlcNAc...) asparagine glycosylation. Asp112 serves as the catalytic Charge relay system. Asn172 carries an N-linked (GlcNAc...) asparagine glycan. Catalysis depends on Ser206, which acts as the Charge relay system. N-linked (GlcNAc...) asparagine glycans are attached at residues Asn213 and Asn255.

The protein belongs to the peptidase S1 family. Snake venom subfamily. As to quaternary structure, monomer. In terms of tissue distribution, expressed by the venom gland.

The protein resides in the secreted. Snake venom serine protease that may act in the hemostasis system of the prey. This chain is Snake venom serine protease KN14, found in Trimeresurus stejnegeri (Chinese green tree viper).